Reading from the N-terminus, the 259-residue chain is Dihydroorotate dehydrogenase B (NAD(+)), electron transfer subunit (259 aa).

The FAD-binding FR-type domain occupies Met2 to Leu102. FAD is bound by residues Arg53–Ser56, Leu70–Arg72, and Gly77–Thr78. [2Fe-2S] cluster-binding residues include Cys221, Cys226, Cys229, and Cys246.

This sequence belongs to the PyrK family. Heterotetramer of 2 PyrK and 2 PyrD type B subunits. [2Fe-2S] cluster is required as a cofactor. Requires FAD as cofactor.

Its pathway is pyrimidine metabolism; UMP biosynthesis via de novo pathway; orotate from (S)-dihydroorotate (NAD(+) route): step 1/1. In terms of biological role, responsible for channeling the electrons from the oxidation of dihydroorotate from the FMN redox center in the PyrD type B subunit to the ultimate electron acceptor NAD(+). The polypeptide is Dihydroorotate dehydrogenase B (NAD(+)), electron transfer subunit (Bacillus cereus (strain B4264)).